A 117-amino-acid polypeptide reads, in one-letter code: Large ribosomal subunit protein eL8 (117 aa).

It belongs to the eukaryotic ribosomal protein eL8 family. In terms of assembly, part of the 50S ribosomal subunit. Part of the RNase P complex.

The protein localises to the cytoplasm. The catalysed reaction is Endonucleolytic cleavage of RNA, removing 5'-extranucleotides from tRNA precursor.. Functionally, multifunctional RNA-binding protein that recognizes the K-turn motif in ribosomal RNA, the RNA component of RNase P, box H/ACA, box C/D and box C'/D' sRNAs. Part of ribonuclease P, a protein complex that generates mature tRNA molecules by cleaving their 5'-ends, this subunit dramatically stimulates RNase P activity. The sequence is that of Large ribosomal subunit protein eL8 from Methanococcus maripaludis (strain DSM 14266 / JCM 13030 / NBRC 101832 / S2 / LL).